We begin with the raw amino-acid sequence, 262 residues long: MVRGPKKHLKRVAAPHHWLLDKLSGTYAPKPSPGPHKARECLPLIVFLRNRLKYALNGREVKAILMQRLIQVDGKVRTDSTFPTGFMDVISVEKTGEHFRLVYDIKGRFTVHRITAEEAKYKLCKVKRVQLGAKGVPFLVTHDGRTIRYPDPLIKVNDTIKLNLETNKIESFIKFDTSAQVMVTGGRNMGRVGTIVHREHHLGSFEIIHVKDALDREFATRLSNVFVIGEAGKSWISLPKGKGVKLSITEERDRRRALKGLA.

An S4 RNA-binding domain is found at 42-105 (LPLIVFLRNR…GEHFRLVYDI (64 aa)). At S223 the chain carries Phosphoserine.

It belongs to the eukaryotic ribosomal protein eS4 family. As to quaternary structure, component of the small ribosomal subunit (SSU). Mature yeast ribosomes consist of a small (40S) and a large (60S) subunit. The 40S small subunit contains 1 molecule of ribosomal RNA (18S rRNA) and at least 33 different proteins. The large 60S subunit contains 3 rRNA molecules (25S, 5.8S and 5S rRNA) and at least 46 different proteins.

It is found in the cytoplasm. The protein localises to the nucleus. Its subcellular location is the nucleolus. Functionally, component of the ribosome, a large ribonucleoprotein complex responsible for the synthesis of proteins in the cell. The small ribosomal subunit (SSU) binds messenger RNAs (mRNAs) and translates the encoded message by selecting cognate aminoacyl-transfer RNA (tRNA) molecules. The large subunit (LSU) contains the ribosomal catalytic site termed the peptidyl transferase center (PTC), which catalyzes the formation of peptide bonds, thereby polymerizing the amino acids delivered by tRNAs into a polypeptide chain. The nascent polypeptides leave the ribosome through a tunnel in the LSU and interact with protein factors that function in enzymatic processing, targeting, and the membrane insertion of nascent chains at the exit of the ribosomal tunnel. This Schizosaccharomyces pombe (strain 972 / ATCC 24843) (Fission yeast) protein is Small ribosomal subunit protein eS4B (rps402).